We begin with the raw amino-acid sequence, 591 residues long: Aspartate--tRNA(Asp/Asn) ligase (591 aa).

Glutamate 174 serves as a coordination point for L-aspartate. Residues 198-201 (QLFK) form an aspartate region. Position 220 (arginine 220) interacts with L-aspartate. ATP-binding positions include 220–222 (RDE) and glutamine 229. An L-aspartate-binding site is contributed by histidine 450. Residue glutamate 483 coordinates ATP. Arginine 490 is a binding site for L-aspartate. 535-538 (GLDR) lines the ATP pocket.

This sequence belongs to the class-II aminoacyl-tRNA synthetase family. Type 1 subfamily. Homodimer.

It localises to the cytoplasm. It carries out the reaction tRNA(Asx) + L-aspartate + ATP = L-aspartyl-tRNA(Asx) + AMP + diphosphate. In terms of biological role, aspartyl-tRNA synthetase with relaxed tRNA specificity since it is able to aspartylate not only its cognate tRNA(Asp) but also tRNA(Asn). Reaction proceeds in two steps: L-aspartate is first activated by ATP to form Asp-AMP and then transferred to the acceptor end of tRNA(Asp/Asn). In Pseudomonas fluorescens (strain SBW25), this protein is Aspartate--tRNA(Asp/Asn) ligase.